The primary structure comprises 353 residues: UPF0283 membrane protein YcjF (353 aa).

The next 3 membrane-spanning stretches (helical) occupy residues 70 to 90 (MVMG…VQWT), 100 to 120 (VALG…GSVV), and 213 to 233 (ESTL…FIAW).

It belongs to the UPF0283 family.

The protein resides in the cell inner membrane. This is UPF0283 membrane protein YcjF from Escherichia fergusonii (strain ATCC 35469 / DSM 13698 / CCUG 18766 / IAM 14443 / JCM 21226 / LMG 7866 / NBRC 102419 / NCTC 12128 / CDC 0568-73).